The chain runs to 349 residues: Isopentenyl-diphosphate delta-isomerase (349 aa).

9 to 10 (RK) lines the substrate pocket. Residues 65–67 (AMT), S95, and N124 contribute to the FMN site. Position 95 to 97 (95 to 97 (STH)) interacts with substrate. Q154 contributes to the substrate binding site. Residue E155 participates in Mg(2+) binding. FMN contacts are provided by residues K186, S211, T216, 262-264 (GLR), and 283-284 (SR).

The protein belongs to the IPP isomerase type 2 family. As to quaternary structure, homooctamer. Dimer of tetramers. It depends on FMN as a cofactor. NADPH serves as cofactor. Requires Mg(2+) as cofactor.

The protein localises to the cytoplasm. It catalyses the reaction isopentenyl diphosphate = dimethylallyl diphosphate. Functionally, involved in the biosynthesis of isoprenoids. Catalyzes the 1,3-allylic rearrangement of the homoallylic substrate isopentenyl (IPP) to its allylic isomer, dimethylallyl diphosphate (DMAPP). The chain is Isopentenyl-diphosphate delta-isomerase from Staphylococcus aureus (strain USA300 / TCH1516).